The primary structure comprises 770 residues: MLPSLALLLLTTWTARALEVPTDGNAGLLAEPQIAMFCGKLNMHMNVQNGKWEPDPSGTKTCIGSKEGILQYCQEVYPELQITNVVEANQPVTIQNWCKRSRKQCKTHPHFVIPYRCLVGEFVSDALLVPDKCKFLHQERMDVCETHLHWHTVAKETCSEKSTNLHDYGMLLPCGIDKFRGVEFVCCPLAEESDNIDSADAEEDDSDVWWGGADTDYADGSEDKVVEVAEEEEVADVEEEEADDDEDVEDGDEVEEEAEEPYEEATEKTTSIATTTTTTTESVEEVVREVCSEQAETGPCRSMISRWYFDVTEGKCAPFFYGGCGGNRNNFDTEEYCMAVCGSVMSQNLLKTSGEPVSQGPVKLPTTAASTPDAVDKYLETPGDENEHAHFQKAKERLEAKHRERMSQVMREWEEAERQAKNLPKADKKAVIQHFQEKVESLEQEAANERQQLVETHMARVEAMLNDRRRLALENYITALQAVPPRPRHVFNMLKKYVRAEQKDRQHTLKHFEHVRMVDPKKAAQIRSQVMTHLRVIYERMNQSLSLLYNVPAVAEEIQDEVDELLQKEQNYSDDVLANMISEPRISYGNDALMPSLTETKTTVELLPVNGEFSLDDLQPWHPFGVDSVPANTENEVEPVDARPAADRGLTTRPGSGLTNIKTEEISEVKMDAEFRHDSGYEVHHQKLVFFAEDVGSNKGAIIGLMVGGVVIATVIVITLVMLKKKQYTSIHHGVVEVDAAVTPEERHLSKMQQNGYENPTYKFFEQMQN.

The first 17 residues, Met1–Ala17, serve as a signal peptide directing secretion. Over Leu18 to Ala701 the chain is Extracellular. Residues Leu28–Val123 form a GFLD subdomain region. Residues Leu28–Leu189 form the E1 domain. 6 disulfide bridges follow: Cys38/Cys62, Cys73/Cys117, Cys98/Cys105, Cys133/Cys187, Cys144/Cys174, and Cys158/Cys186. Heparin is bound at residue Asn96–His110. Residues Asp131 to Leu189 are cuBD subdomain. Residues Phe135 to Lys155 are copper-binding. 3 residues coordinate Cu(2+): His147, His151, and Tyr168. The tract at residues Gly181–Pro188 is zinc-binding. Zn(2+)-binding residues include Glu183, Cys186, and Cys187. The segment covering Ile196–Asp207 has biased composition (acidic residues). The disordered stretch occupies residues Ile196–Glu281. Ser198 bears the Phosphoserine; by CK2 mark. At Ser206 the chain carries Phosphoserine; by CK1. Sulfotyrosine is present on Tyr217. Over residues Val228 to Glu264 the composition is skewed to acidic residues. The segment covering Lys268 to Glu281 has biased composition (low complexity). 3 cysteine pairs are disulfide-bonded: Cys291–Cys341, Cys300–Cys324, and Cys316–Cys337. Residues Cys291 to Cys341 form the BPTI/Kunitz inhibitor domain. Tyr336 is modified (sulfotyrosine). Residues Val344–Pro365 carry the OX-2 motif. The region spanning Ala374–Leu565 is the E2 domain. Residues Phe391–Leu423 form a heparin-binding region. Ser441 carries the phosphoserine modification. Residues Phe491–Lys522 are heparin-binding. Tyr497 carries the post-translational modification Phosphotyrosine. The interval Ala523–Arg540 is collagen-binding. N-linked (GlcNAc...) asparagine glycosylation is found at Asn542 and Asn571. O-linked (Xyl...) (chondroitin sulfate) serine glycosylation is present at Ser656. Cu(2+)-binding residues include His677, Tyr681, His684, and His685. 4 residues coordinate Zn(2+): His677, Tyr681, His684, and His685. The segment at Val695 to Met722 is interaction with PSEN1. The helical transmembrane segment at Ile702–Met722 threads the bilayer. The Cytoplasmic segment spans residues Leu723–Asn770. A Basolateral sorting signal motif is present at residues Lys724–Gly734. A Phosphothreonine modification is found at Thr729. Ser730 carries the phosphoserine; by APP-kinase I modification. Residues His732–Lys751 form an interaction with G(o)-alpha region. The residue at position 743 (Thr743) is a Phosphothreonine; by CDK5 and MAPK10. The segment at Gly756–Asn770 is required for the interaction with KIF5B and for anterograde transport in axons. Residue Tyr757 is modified to Phosphotyrosine; by ABL1. Residues Tyr757–Tyr762 carry the YENPXY motif; contains endocytosis signal motif. Lys763 participates in a covalent cross-link: Glycyl lysine isopeptide (Lys-Gly) (interchain with G-Cter in ubiquitin).

The protein belongs to the APP family. As to quaternary structure, binds, via its C-terminus, to the PID domain of several cytoplasmic proteins, including APBB family members, the APBA family, MAPK8IP1, SHC1 and NUMB and DAB1. Binding to DAB1 inhibits its serine phosphorylation. Interacts (via NPXY motif) with DAB2 (via PID domain); the interaction is impaired by tyrosine phosphorylation of the NPXY motif. Also interacts with GPCR-like protein BPP, APPBP1, IB1, KNS2 (via its TPR domains), APPBP2 (via BaSS) and DDB1. In vitro, it binds MAPT via the MT-binding domains. Associates with microtubules in the presence of ATP and in a kinesin-dependent manner. Interacts, through a C-terminal domain, with GNAO1. Amyloid-beta protein 42 binds CHRNA7 in hippocampal neurons. Amyloid-beta associates with HADH2. Interacts with CPEB1, ANKS1B and AGER. Interacts with ITM2B. Interacts with ITM2C. Interacts with IDE. Can form homodimers; dimerization is enhanced in the presence of Cu(2+) ions. Can form homodimers; this is promoted by heparin binding. Amyloid-beta protein 40 interacts with S100A9. CTF-alpha product of APP interacts with GSAP. Isoform APP695 interacts with SORL1 (via N-terminal ectodomain); this interaction retains APP in the trans-Golgi network and reduces processing into soluble APP-alpha and amyloid-beta peptides. Isoform APP770 interacts with SORL1. The C99 fragment also interacts with SORL1. Interacts with PLD3. Interacts with VDAC1. Interacts with NSG1; could regulate APP processing. Amyloid-beta protein 42 interacts with FPR2. Interacts (via transmembrane region) with PSEN1; the interaction is direct. Interacts with LRRK2. Interacts (via cytoplasmic domain) with KIF5B. Interacts (via C-terminus) with APBB2/FE65L1 (via C-terminus). Interacts (via intracellular domain) with APBB3. Post-translationally, proteolytically processed under normal cellular conditions. Cleavage either by alpha-secretase, beta-secretase or theta-secretase leads to generation and extracellular release of soluble APP peptides, S-APP-alpha and S-APP-beta, and the retention of corresponding membrane-anchored C-terminal fragments, C80, C83 and C99. Subsequent processing of C80 and C83 by gamma-secretase yields P3 peptides. This is the major secretory pathway and is non-amyloidogenic. Alternatively, presenilin/nicastrin-mediated gamma-secretase processing of C99 releases the amyloid-beta proteins, amyloid-beta protein 40 and amyloid-beta protein 42, major components of amyloid plaques, and the cytotoxic C-terminal fragments, gamma-CTF(50), gamma-CTF(57) and gamma-CTF(59). PSEN1 cleavage is more efficient with C83 than with C99 as substrate (in vitro). Amyloid-beta protein 40 and Amyloid-beta protein 42 are cleaved by ACE. Many other minor amyloid-beta peptides, amyloid-beta 1-X peptides, are found in cerebral spinal fluid (CSF) including the amyloid-beta X-15 peptides, produced from the cleavage by alpha-secretase. Proteolytically cleaved by caspases during neuronal apoptosis. Cleavage at Asp-739 by either CASP6, CASP8 or CASP9 results in the production of the neurotoxic C31 peptide and the increased production of amyloid-beta peptides. In terms of processing, N- and O-glycosylated. Post-translationally, phosphorylation in the C-terminal on tyrosine, threonine and serine residues is neuron-specific. Phosphorylation can affect APP processing, neuronal differentiation and interaction with other proteins. Phosphorylated on Thr-743 in neuronal cells by Cdc5 kinase and Mapk10, in dividing cells by Cdc2 kinase in a cell-cycle dependent manner with maximal levels at the G2/M phase and, in vitro, by GSK-3-beta. The Thr-743 phosphorylated form causes a conformational change which reduces binding of Fe65 family members. In dopaminergic (DA) neurons, phosphorylation on Thr-743 by LRKK2 promotes the production and the nuclear translocation of the APP intracellular domain (AICD) which induces DA neuron apoptosis. Phosphorylation on Tyr-757 is required for SHC binding. Phosphorylated in the extracellular domain by casein kinases on both soluble and membrane-bound APP. This phosphorylation is inhibited by heparin. N- and O-glycosylated. O-linkage of chondroitin sulfate to the L-APP isoforms produces the APP proteoglycan core proteins, the appicans. In terms of processing, extracellular binding and reduction of copper, results in a corresponding oxidation of Cys-144 and Cys-158, and the formation of a disulfide bond. Post-translationally, trophic-factor deprivation triggers the cleavage of surface APP by beta-secretase to release sAPP-beta which is further cleaved to release an N-terminal fragment of APP (N-APP). Amyloid-beta peptides are degraded by IDE. In terms of processing, sulfated on tyrosine residues. Isoform APP695 is the major isoform found in brain. The longer isoforms containing the BPTI domain are predominantly expressed in peripheral organs such as muscle and liver.

It localises to the cell membrane. The protein resides in the membrane. It is found in the perikaryon. The protein localises to the cell projection. Its subcellular location is the growth cone. It localises to the clathrin-coated pit. The protein resides in the early endosome. It is found in the cytoplasmic vesicle. The protein localises to the endoplasmic reticulum. Its subcellular location is the golgi apparatus. It localises to the secreted. The protein resides in the cell surface. It is found in the nucleus. The protein localises to the cytoplasm. Functionally, functions as a cell surface receptor and performs physiological functions on the surface of neurons relevant to neurite growth, neuronal adhesion and axonogenesis. Interaction between APP molecules on neighboring cells promotes synaptogenesis. Involved in cell mobility and transcription regulation through protein-protein interactions. Can promote transcription activation through binding to APBB1-KAT5 and inhibit Notch signaling through interaction with Numb. Couples to apoptosis-inducing pathways such as those mediated by G(o) and JIP. Inhibits G(o)-alpha ATPase activity. Acts as a kinesin I membrane receptor, mediating the axonal transport of beta-secretase and presenilin 1. By acting as a kinesin I membrane receptor, plays a role in axonal anterograde transport of cargo towards synapses in axons. May be involved in copper homeostasis/oxidative stress through copper ion reduction. In vitro, copper-metallated APP induces neuronal death directly or is potentiated through Cu(2+)-mediated low-density lipoprotein oxidation. Can regulate neurite outgrowth through binding to components of the extracellular matrix such as heparin and collagen I and IV. Induces a AGER-dependent pathway that involves activation of p38 MAPK, resulting in internalization of amyloid-beta peptide and mitochondrial dysfunction in cultured cortical neurons. Provides Cu(2+) ions for GPC1 which are required for release of nitric oxide (NO) and subsequent degradation of the heparan sulfate chains on GPC1. Amyloid-beta peptides are lipophilic metal chelators with metal-reducing activity. Binds transient metals such as copper, zinc and iron. Amyloid-beta peptides bind to lipoproteins and apolipoproteins E and J in the CSF and to HDL particles in plasma, inhibiting metal-catalyzed oxidation of lipoproteins. Also bind GPC1 in lipid rafts. In terms of biological role, appicans elicit adhesion of neural cells to the extracellular matrix and may regulate neurite outgrowth in the brain. Its function is as follows. The gamma-CTF peptides as well as the caspase-cleaved peptides, including C31, are potent enhancers of neuronal apoptosis. In Cavia porcellus (Guinea pig), this protein is Amyloid-beta precursor protein.